Reading from the N-terminus, the 509-residue chain is MDIRAAEISAILKDQIKNFGKEAEVSEVGQVLSVGDGIARVYGLDNVQAGEMVEFPGGIRGMALNLEVDNVGVVIFGADRDIKEGDTVKRTGAIVEVPVGPGLLGRVVDALGNPIDGKGPIQATERRRVDVKAPGIIPRKSVHEPMSTGLKAIDALIPIGRGQRELIIGDRQTGKTAIILDTFLNQKPLNDGDDESQKLYCIYVAVGQKRSTVAQFVKVLEERGALEYSIVVAATASDPAPMQFLAPFAGCAMGEYFRDNGKHAVIAYDDLSKQAVAYRQMSLLLRRPPGREAYPGDVFYLHSRLLERAAKMNDDNGSGSLTALPVIETQANDVSAYIPTNVISITDGQIFLETNLFFQGVRPAVNVGLSVSRVGSAAQVKAMKQVAGSIKGELAQYREMAAFAQFGSDLDAATQRLLNRGARLTELLKQPQFSPLKTEEQVVVIFAGVNGYLDALALRDVGRFEQGLLTHMRSEGKEILDAIRVEKALSDDLRAKLKAEIDAYAKNFS.

Position 169–176 (169–176) interacts with ATP; the sequence is GDRQTGKT.

The protein belongs to the ATPase alpha/beta chains family. As to quaternary structure, F-type ATPases have 2 components, CF(1) - the catalytic core - and CF(0) - the membrane proton channel. CF(1) has five subunits: alpha(3), beta(3), gamma(1), delta(1), epsilon(1). CF(0) has three main subunits: a(1), b(2) and c(9-12). The alpha and beta chains form an alternating ring which encloses part of the gamma chain. CF(1) is attached to CF(0) by a central stalk formed by the gamma and epsilon chains, while a peripheral stalk is formed by the delta and b chains.

Its subcellular location is the cell inner membrane. It carries out the reaction ATP + H2O + 4 H(+)(in) = ADP + phosphate + 5 H(+)(out). Produces ATP from ADP in the presence of a proton gradient across the membrane. The alpha chain is a regulatory subunit. This Chelativorans sp. (strain BNC1) protein is ATP synthase subunit alpha.